The chain runs to 157 residues: Transcriptional repressor NrdR (157 aa).

Residues 3-34 (CSNCQNKNTKVLDSRPIEEGRAIRRRRECERC) fold into a zinc finger. Residues 49 to 139 (LIVVKKDGVR…VYRQFKDITV (91 aa)) form the ATP-cone domain.

The protein belongs to the NrdR family. Zn(2+) serves as cofactor.

In terms of biological role, negatively regulates transcription of bacterial ribonucleotide reductase nrd genes and operons by binding to NrdR-boxes. The protein is Transcriptional repressor NrdR of Oceanobacillus iheyensis (strain DSM 14371 / CIP 107618 / JCM 11309 / KCTC 3954 / HTE831).